A 342-amino-acid polypeptide reads, in one-letter code: uncharacterized protein (342 aa).

The signal sequence occupies residues 1–18 (MWKKLMLLLLMAIPLVSA).

This is an uncharacterized protein from Methanocaldococcus jannaschii (strain ATCC 43067 / DSM 2661 / JAL-1 / JCM 10045 / NBRC 100440) (Methanococcus jannaschii).